We begin with the raw amino-acid sequence, 229 residues long: Demethylmenaquinone methyltransferase (229 aa).

Residues threonine 57, aspartate 77, and aspartate 101–valine 102 contribute to the S-adenosyl-L-methionine site.

It belongs to the class I-like SAM-binding methyltransferase superfamily. MenG/UbiE family.

It carries out the reaction a 2-demethylmenaquinol + S-adenosyl-L-methionine = a menaquinol + S-adenosyl-L-homocysteine + H(+). Its pathway is quinol/quinone metabolism; menaquinone biosynthesis; menaquinol from 1,4-dihydroxy-2-naphthoate: step 2/2. Its function is as follows. Methyltransferase required for the conversion of demethylmenaquinol (DMKH2) to menaquinol (MKH2). This Chlamydia trachomatis serovar A (strain ATCC VR-571B / DSM 19440 / HAR-13) protein is Demethylmenaquinone methyltransferase.